A 152-amino-acid chain; its full sequence is UPF0266 membrane protein YobD (152 aa).

3 consecutive transmembrane segments (helical) span residues 6-26 (LVLI…QFIM), 45-65 (IDSV…VTNH), and 67-87 (ALIT…IFWI).

This sequence belongs to the UPF0266 family.

The protein localises to the cell inner membrane. The chain is UPF0266 membrane protein YobD from Escherichia coli O45:K1 (strain S88 / ExPEC).